The sequence spans 613 residues: Immunoglobulin superfamily member 8 (613 aa).

Residues 1–27 (MGALRPTLLPPSLPLLLLLMLGMGCWA) form the signal peptide. Ig-like C2-type domains follow at residues 28–149 (REVL…LRVL), 162–286 (PRGR…WAQI), 303–424 (SQLA…EAAS), and 431–560 (PVHV…WYQA). Topologically, residues 28–579 (REVLVPEGPL…VYPYMHALDT (552 aa)) are extracellular. A disulfide bond links Cys-49 and Cys-127. Residue Asn-50 is glycosylated (N-linked (GlcNAc...) asparagine). A disordered region spans residues 155-174 (VSAAPPGPRGRQAPTSPPRM). A disulfide bridge links Cys-186 with Cys-270. The EWI motif motif lies at 274–276 (EWI). 2 disulfides stabilise this stretch: Cys-326–Cys-406 and Cys-462–Cys-544. 2 N-linked (GlcNAc...) asparagine glycosylation sites follow: Asn-327 and Asn-463. Phosphoserine is present on Ser-518. Residues 580–600 (LFVPLLVGTGVALVTGATVLG) traverse the membrane as a helical segment. Over 601-613 (TITCCFMKRLRKR) the chain is Cytoplasmic. S-palmitoyl cysteine attachment occurs at residues Cys-604 and Cys-605.

In terms of assembly, interacts directly with CD82, CD81/tetraspanin-28 and CD9/tetraspanin-29. Also interacts with integrin alpha-3/beta-1 and integrin alpha-4/beta-1. Interacts with HSPA8; this interaction modulates migratory and antigen-presenting capacities of dendritic cells. As to expression, expressed in brain, kidney, testis, liver and placenta with moderate expression in all other tissues. Detected on a majority of B-cells, T-cells, and natural killer cells. Expressed on dendritic cells.

It localises to the cell membrane. Functionally, member of the immunoglobulin superfamily (IgSF) that links tetraspanin-enriched microdomains to the actin cytoskeleton and plays several important roles in innate and adaptive immunity. Acts as an inducible receptor of HSPA8 on dendritic cells to enhance the CCL21/SLC-dependent migration of activated mature dendritic cells while attenuating their antigen-specific stimulatory capacities. In complex with alpha-actinins ACTN1 and ACTN4, regulates actin dynamics in the immune synapse and subsequent T-cell activation. Inhibits the entry of several viruses such as hepatitis C Virus (HCV) or HIV-1. Mechanistically, promotes a change in CD81 organization at the plasma membrane by significantly restricting its diffusion which in turn influences CD81 interaction with Claudin-1/CLDN1, preventing CLDN1 from acting as a co-receptor required for HCV entry. Accumulates at the presynaptic terminal, the producer cell side of the virological synapse, to prevent HIV-1 Env-mediated cell-cell fusion. Highly expressed on malignant cells with antigen presentation defects, interacts with NK receptor KIR3DL2 to suppress NK-cell cytotoxicity. May participate in the regulation of neurite outgrowth and maintenance of the neural network in the adult brain. The protein is Immunoglobulin superfamily member 8 (IGSF8) of Homo sapiens (Human).